The sequence spans 648 residues: Indolepyruvate oxidoreductase subunit IorA (648 aa).

2 4Fe-4S ferredoxin-type domains span residues 585-614 and 616-645; these read PIYQVNEEKCTGCKICINAYGCPAIYWDAE and KKARVDPLMCWGCGGCAQVCPFGAFEKVRE. 8 residues coordinate [4Fe-4S] cluster: Cys-594, Cys-597, Cys-600, Cys-606, Cys-625, Cys-628, Cys-631, and Cys-635.

Heterodimer of the IorA and IorB subunits. The cofactor is [4Fe-4S] cluster.

The enzyme catalyses indole-3-pyruvate + 2 oxidized [2Fe-2S]-[ferredoxin] + CoA = (indol-3-yl)acetyl-CoA + 2 reduced [2Fe-2S]-[ferredoxin] + CO2 + H(+). In terms of biological role, catalyzes the ferredoxin-dependent oxidative decarboxylation of arylpyruvates. The sequence is that of Indolepyruvate oxidoreductase subunit IorA (iorA) from Pyrococcus horikoshii (strain ATCC 700860 / DSM 12428 / JCM 9974 / NBRC 100139 / OT-3).